A 223-amino-acid polypeptide reads, in one-letter code: Ribosomal RNA small subunit methyltransferase Nep1 (223 aa).

S-adenosyl-L-methionine-binding positions include Gly-181, Gly-186, and 199-204; that span reads LYREPL.

It belongs to the class IV-like SAM-binding methyltransferase superfamily. RNA methyltransferase NEP1 family. In terms of assembly, homodimer.

The catalysed reaction is a pseudouridine in rRNA + S-adenosyl-L-methionine = an N(1)-methylpseudouridine in rRNA + S-adenosyl-L-homocysteine + H(+). In terms of biological role, methyltransferase involved in ribosomal biogenesis. Specifically catalyzes the N1-methylation of the pseudouridine corresponding to position 914 in M.jannaschii 16S rRNA. This chain is Ribosomal RNA small subunit methyltransferase Nep1, found in Pyrococcus furiosus (strain ATCC 43587 / DSM 3638 / JCM 8422 / Vc1).